Here is a 122-residue protein sequence, read N- to C-terminus: Large ribosomal subunit protein uL22 (122 aa).

The protein belongs to the universal ribosomal protein uL22 family. Part of the 50S ribosomal subunit.

In terms of biological role, this protein binds specifically to 23S rRNA; its binding is stimulated by other ribosomal proteins, e.g. L4, L17, and L20. It is important during the early stages of 50S assembly. It makes multiple contacts with different domains of the 23S rRNA in the assembled 50S subunit and ribosome. Functionally, the globular domain of the protein is located near the polypeptide exit tunnel on the outside of the subunit, while an extended beta-hairpin is found that lines the wall of the exit tunnel in the center of the 70S ribosome. In Prochlorococcus marinus (strain MIT 9303), this protein is Large ribosomal subunit protein uL22.